The following is a 384-amino-acid chain: Secreted LysM effector Blys7 (384 aa).

An N-terminal signal peptide occupies residues 1–18; the sequence is MQRHLLLGLAGLPALLSA. The 45-residue stretch at 27 to 71 folds into the LysM 1 domain; the sequence is FATVAANGETCDSMAATWGLDTATFQSLNPKAKCPEVIGGEQYCV. A compositionally biased stretch (low complexity) spans 81–106; sequence EPTTAPATTSTQTTTTTTTEVTSTTV. The interval 81–112 is disordered; it reads EPTTAPATTSTQTTTTTTTEVTSTTVPGNGIT. The region spanning 127-173 is the LysM 2 domain; the sequence is KFYFVNKGDNCADITARYNLDLSDFLEWNPKAGNSCSGLWANAYACV. The disordered stretch occupies residues 183-206; the sequence is KPKPTSTSTKPPTATGNGIPTPLP. The span at 186-195 shows a compositional bias: low complexity; that stretch reads PTSTSTKPPT. The LysM 3 domain occupies 217–263; the sequence is KFYLVKPGETCADIASRNGVSLSDFLQWNPHAGNACSGLWANAYACL.

This sequence belongs to the secreted LysM effector family.

Might have a role in sequestration of chitin oligosaccharides (breakdown products of fungal cell walls that are released during invasion and act as triggers of host immunity) to dampen host defense. The protein is Secreted LysM effector Blys7 of Beauveria bassiana (strain ARSEF 2860) (White muscardine disease fungus).